A 767-amino-acid chain; its full sequence is 5-methyltetrahydropteroyltriglutamate--homocysteine methyltransferase (767 aa).

K126 serves as a coordination point for 5-methyltetrahydropteroyltri-L-glutamate. L-homocysteine-binding positions include 445 to 447 and E498; that span reads IGS. Residues 445-447 and E498 contribute to the L-methionine site; that span reads IGS. Residues 529–530 and W575 contribute to the 5-methyltetrahydropteroyltri-L-glutamate site; that span reads RC. Residue D613 coordinates L-homocysteine. D613 is an L-methionine binding site. E619 is a binding site for 5-methyltetrahydropteroyltri-L-glutamate. H655, C657, and E679 together coordinate Zn(2+). The active-site Proton donor is the H708. C740 serves as a coordination point for Zn(2+).

The protein belongs to the vitamin-B12 independent methionine synthase family. Zn(2+) is required as a cofactor.

The enzyme catalyses 5-methyltetrahydropteroyltri-L-glutamate + L-homocysteine = tetrahydropteroyltri-L-glutamate + L-methionine. It functions in the pathway amino-acid biosynthesis; L-methionine biosynthesis via de novo pathway; L-methionine from L-homocysteine (MetE route): step 1/1. Catalyzes the transfer of a methyl group from 5-methyltetrahydrofolate to homocysteine resulting in methionine formation. This chain is 5-methyltetrahydropteroyltriglutamate--homocysteine methyltransferase, found in Psychromonas ingrahamii (strain DSM 17664 / CCUG 51855 / 37).